The following is a 151-amino-acid chain: Small ribosomal subunit protein bS6 (151 aa).

Positions 94–151 are disordered; the sequence is EEHEQGPSAMMRKRDDDDRGERGERPRGPRPERGERGERGERGPRRPREDNIGEEGLY. Residues 105 to 144 show a composition bias toward basic and acidic residues; that stretch reads RKRDDDDRGERGERPRGPRPERGERGERGERGPRRPREDN.

The protein belongs to the bacterial ribosomal protein bS6 family.

In terms of biological role, binds together with bS18 to 16S ribosomal RNA. The chain is Small ribosomal subunit protein bS6 from Beijerinckia indica subsp. indica (strain ATCC 9039 / DSM 1715 / NCIMB 8712).